The primary structure comprises 1336 residues: Immunoglobulin superfamily member 1 (1336 aa).

Positions 1–28 are cleaved as a signal peptide; it reads MTLDRPGEGATMLKTFTVLLFCIRMSLG. The Extracellular segment spans residues 29 to 518; the sequence is MTSIVMDPQP…GYLTWNYVLN (490 aa). 5 Ig-like C2-type domains span residues 38-122, 137-222, 226-312, 321-408, and 419-500; these read PELW…KVLE, QAET…LVVA, PKPT…SDVL, PKTW…PSHN, and PKPS…HRSE. An N-linked (GlcNAc...) asparagine glycan is attached at N53. A disulfide bond links C58 and C106. The cysteines at positions 248 and 296 are disulfide-linked. N338, N374, and N381 each carry an N-linked (GlcNAc...) asparagine glycan. 2 disulfides stabilise this stretch: C343/C392 and C441/C484. The chain crosses the membrane as a helical span at residues 519–539; the sequence is EAIRLSLIMQLVALLLVVLWI. Residues 540–559 are Cytoplasmic-facing; the sequence is RWKCRRLRIREAWLLGTAQG. The chain crosses the membrane as a helical span at residues 560-580; that stretch reads VTMLFIVTALLCCGLCNGVLI. Residues 581–1336 are Extracellular-facing; the sequence is EETEIVMPTP…RISVELPVPI (756 aa). 7 consecutive Ig-like C2-type domains span residues 589-677, 686-760, 777-869, 873-958, 965-1060, 1065-1150, and 1161-1242; these read TPKP…ALEL, PVIS…RPFK, PKPF…LVVT, PKPT…YLSM, TDTF…ELLV, PKPS…NHSD, and PKPS…EPSD. N-linked (GlcNAc...) asparagine glycosylation is found at N607, N747, N798, N846, N939, N986, N1027, and N1082. C703 and C750 are disulfide-bonded. 2 cysteine pairs are disulfide-bonded: C799-C849 and C895-C942. C1087 and C1134 form a disulfide bridge. N-linked (GlcNAc...) asparagine glycans are attached at residues N1147 and N1223. C1183 and C1226 are oxidised to a cystine. Residues 1308–1336 form a disordered region; it reads CNQEGEPGTPANSPSSTSQRISVELPVPI. The span at 1317–1328 shows a compositional bias: polar residues; it reads PANSPSSTSQRI.

In terms of assembly, interacts with INHA. In PubMed:12385827 does not interact with INHA; standard receptor binding assay. Interacts with ACVR1B; the interaction appears to be ligand-dependent as it is diminished by inhibin B and activin A. Interacts with ACVR2A, ACVR2B, ACVRL1 and BMPR1B. Interacts with HECTD1. Highly expressed in pancreas, testis and fetal liver. Moderately expressed in heart, prostate and small intestine. Expressed at very low levels in brain, thymus, ovary, colon, fetal lung and fetal kidney. Expressed in muscle. Isoform 3 is expressed in pituitary gland.

Its subcellular location is the membrane. It is found in the secreted. In terms of biological role, seems to be a coreceptor in inhibin signaling, but seems not to be a high-affinity inhibin receptor. Antagonizes activin A signaling in the presence or absence of inhibin B. Necessary to mediate a specific antagonistic effect of inhibin B on activin-stimulated transcription. The polypeptide is Immunoglobulin superfamily member 1 (IGSF1) (Homo sapiens (Human)).